A 288-amino-acid polypeptide reads, in one-letter code: 33 kDa chaperonin (288 aa).

2 disulfide bridges follow: Cys235–Cys237 and Cys268–Cys271.

It belongs to the HSP33 family. Post-translationally, under oxidizing conditions two disulfide bonds are formed involving the reactive cysteines. Under reducing conditions zinc is bound to the reactive cysteines and the protein is inactive.

It is found in the cytoplasm. Its function is as follows. Redox regulated molecular chaperone. Protects both thermally unfolding and oxidatively damaged proteins from irreversible aggregation. Plays an important role in the bacterial defense system toward oxidative stress. In Streptococcus suis (strain 98HAH33), this protein is 33 kDa chaperonin.